The sequence spans 411 residues: Tyrosine--tRNA ligase (411 aa).

Residue Tyr34 participates in L-tyrosine binding. The 'HIGH' region signature appears at 39–48; sequence CTATSLHIGS. Residues Tyr171 and Gln175 each contribute to the L-tyrosine site. Positions 231–235 match the 'KMSKS' region motif; that stretch reads KMGKT. Position 234 (Lys234) interacts with ATP. Residues 345–411 enclose the S4 RNA-binding domain; it reads ISAYELFHEA…GKKRHILVRV (67 aa).

The protein belongs to the class-I aminoacyl-tRNA synthetase family. TyrS type 1 subfamily. Homodimer.

Its subcellular location is the cytoplasm. The enzyme catalyses tRNA(Tyr) + L-tyrosine + ATP = L-tyrosyl-tRNA(Tyr) + AMP + diphosphate + H(+). In terms of biological role, catalyzes the attachment of tyrosine to tRNA(Tyr) in a two-step reaction: tyrosine is first activated by ATP to form Tyr-AMP and then transferred to the acceptor end of tRNA(Tyr). The protein is Tyrosine--tRNA ligase of Rickettsia africae (strain ESF-5).